The sequence spans 631 residues: Tail sheath protein (631 aa).

The protein belongs to the myoviridae tail sheath protein family. Homomultimer.

The protein resides in the virion. It is found in the host cytoplasm. In terms of biological role, polymerizes as an extended structure around the baseplate-tail tube complex. During ejection, the sheath shifts to a contracted form, thereby making the inner tail tube protrude through the host cell envelope. The sequence is that of Tail sheath protein from Salmonella typhi.